We begin with the raw amino-acid sequence, 538 residues long: D-alanyl-D-alanine carboxypeptidase (538 aa).

Residues 1-21 (MKQSSPEPLRPRRTGGRGGAR) are disordered. A signal peptide spans 1–49 (MKQSSPEPLRPRRTGGRGGARRAAALVTIPLLPMTLLGASPALADASGA). The active-site Acyl-ester intermediate is Ser98. The Proton acceptor role is filled by Lys101. An absent in class-A beta-lactamases region spans residues 146–319 (TLSAEDLDAM…KGDVGLGGVP (174 aa)). Ser347 is an active-site residue. Lys459 is a binding site for substrate. Positions 516–538 (GARMMRGPVQGSGELECSWVQAC) are cleaved as a propeptide — removed in mature form.

The protein belongs to the peptidase S13 family.

Its subcellular location is the secreted. The catalysed reaction is Preferential cleavage: (Ac)2-L-Lys-D-Ala-|-D-Ala. Also transpeptidation of peptidyl-alanyl moieties that are N-acyl substituents of D-alanine.. It functions in the pathway cell wall biogenesis; peptidoglycan biosynthesis. Inhibited by benzylpenicillin, cephaloridine, ampicillin and cetiofur. In terms of biological role, removes C-terminal D-alanyl residues from sugar-peptide cell wall precursors. This chain is D-alanyl-D-alanine carboxypeptidase (dac), found in Actinomadura sp. (strain R39).